The chain runs to 220 residues: MFDIVPIRIFGTSSIGVFLATNNSVTFLPPDVPEKIDDIVRNTLRTTVARLTVAKSPLLGIFTVVNDNGVLLPPMVLEEEIRLFKALGLNVEVLNTKYTAISNLILAGNKVALVSPLLEPSVRKVVADVLGVEVIVDTIAGNPLVGSLAVLNSRGVLVAPEATDEDLKKLAEYFKAKTDLGTVNKGKSFLRGGIVVNDHGALVGDETAGPEFMRIQQVLG.

Belongs to the eIF-6 family.

Binds to the 50S ribosomal subunit and prevents its association with the 30S ribosomal subunit to form the 70S initiation complex. The protein is Translation initiation factor 6 of Pyrobaculum arsenaticum (strain DSM 13514 / JCM 11321 / PZ6).